Here is a 343-residue protein sequence, read N- to C-terminus: Armadillo repeat-containing protein 10 (343 aa).

A helical membrane pass occupies residues 5 to 27 (RGAGWVAAGLLLGAGACYCIYRL). The disordered stretch occupies residues 43–83 (SKSAGALEEGTSEGQLCGRSARPQTGGTWESQWSKTSQPED). Ser45 carries the phosphoserine modification. Glu50 is modified (phosphothreonine). Positions 64-82 (RPQTGGTWESQWSKTSQPE) are enriched in polar residues. At Thr85 the chain carries Phosphothreonine. One copy of the ARM repeat lies at 138–180 (GGIPIVANKINHSNQSIKEKALNALNNLSVNVENQIKIKIYIS).

In terms of assembly, interacts with the DNA-binding domain of p53/TP53. As to expression, expressed in all tissues tested with higher expression in placenta, liver, kidney, heart and brain.

It localises to the endoplasmic reticulum membrane. The protein localises to the mitochondrion outer membrane. Functionally, may play a role in cell survival and cell growth. May suppress the transcriptional activity of p53/TP53. The sequence is that of Armadillo repeat-containing protein 10 (ARMC10) from Homo sapiens (Human).